Reading from the N-terminus, the 282-residue chain is Protein-glutamine deamidase Cif (282 aa).

The interval 1-16 (MKDITLPPPTSASCLT) is translocation domain (TD). Catalysis depends on residues Cys109, His165, and Gln185.

This sequence belongs to the Cif family.

The protein localises to the secreted. It is found in the host nucleus. It carries out the reaction L-glutaminyl-[protein] + H2O = L-glutamyl-[protein] + NH4(+). Its function is as follows. Protein-glutamine deamidase effector that inhibits the host cell cycle and other key cellular processes such as the actin network and programmed-cell death. Acts by mediating the side chain deamidation of 'Gln-40' of host NEDD8, converting it to glutamate, thereby abolishing the activity of cullin-RING-based E3 ubiquitin-protein ligase complexes (CRL complexes). Inactivation of CRL complexes prevents ubiquitination and subsequent degradation of the cyclin-dependent kinase inhibitors CDKN1A/p21 and CDKN1B/p27, leading to G1 and G2 cell cycle arrests in host cells. Also able to catalyze deamidation of 'Gln-40' of host ubiquitin in vitro; however, NEDD8 constitutes the preferred substrate in vivo. This is Protein-glutamine deamidase Cif from Escherichia coli.